The sequence spans 375 residues: Period circadian protein (375 aa).

Disordered regions lie at residues 28–118 (TAPV…AVTP), 140–189 (KHRE…WEGE), and 220–254 (CQASGAGGGGSGSVGGTGNIGSGGSNAQPSTNQYA). Low complexity predominate over residues 69 to 91 (SGNFTTGSNLHMSSVTNTSNAGT). The segment covering 92–113 (GTSGTGNSGGGGGGGGGGGPGN) has biased composition (gly residues). Basic and acidic residues predominate over residues 145–156 (RGRSGEKNKKSA). The segment covering 224–243 (GAGGGGSGSVGGTGNIGSGG) has biased composition (gly residues). Residues 245–254 (NAQPSTNQYA) show a composition bias toward polar residues.

Forms a heterodimer with timeless (TIM); the complex then translocates into the nucleus. In terms of processing, phosphorylated with a circadian rhythmicity, probably by the double-time protein (dbt). Phosphorylation could be implicated in the stability of per monomer and in the formation of heterodimer per-tim.

The protein resides in the nucleus. Its subcellular location is the cytoplasm. It localises to the perinuclear region. Its function is as follows. Essential for biological clock functions. Determines the period length of circadian and ultradian rhythms; an increase in PER dosage leads to shortened circadian rhythms and a decrease leads to lengthened circadian rhythms. Essential for the circadian rhythmicity of locomotor activity, eclosion behavior, and for the rhythmic component of the male courtship song that originates in the thoracic nervous system. The biological cycle depends on the rhythmic formation and nuclear localization of the TIM-PER complex. Light induces the degradation of TIM, which promotes elimination of PER. Nuclear activity of the heterodimer coordinatively regulates PER and TIM transcription through a negative feedback loop. Behaves as a negative element in circadian transcriptional loop. Does not appear to bind DNA, suggesting indirect transcriptional inhibition. This is Period circadian protein (per) from Drosophila capricorni (Fruit fly).